Reading from the N-terminus, the 107-residue chain is uncharacterized protein (107 aa).

The span at 80 to 98 (SIDNLKPTSHQNGTTNDTA) shows a compositional bias: polar residues. The disordered stretch occupies residues 80-107 (SIDNLKPTSHQNGTTNDTATMDHLEKNE).

This is an uncharacterized protein from Human spumaretrovirus (SFVcpz(hu)).